A 172-amino-acid chain; its full sequence is Shikimate kinase (172 aa).

Residue 14 to 19 participates in ATP binding; the sequence is GAGKTT. T18 provides a ligand contact to Mg(2+). Substrate contacts are provided by D36, R60, and G82. R119 contributes to the ATP binding site. R137 is a binding site for substrate.

This sequence belongs to the shikimate kinase family. As to quaternary structure, monomer. The cofactor is Mg(2+).

It localises to the cytoplasm. It catalyses the reaction shikimate + ATP = 3-phosphoshikimate + ADP + H(+). Its pathway is metabolic intermediate biosynthesis; chorismate biosynthesis; chorismate from D-erythrose 4-phosphate and phosphoenolpyruvate: step 5/7. Its function is as follows. Catalyzes the specific phosphorylation of the 3-hydroxyl group of shikimic acid using ATP as a cosubstrate. This Thermobifida fusca (strain YX) protein is Shikimate kinase.